The chain runs to 164 residues: Hoefavidin (164 aa).

The first 22 residues, methionine 1–alanine 22, serve as a signal peptide directing secretion. The 124-residue stretch at lysine 32–alanine 155 folds into the Avidin-like domain. Biotin contacts are provided by asparagine 42, serine 46, tyrosine 68, asparagine 70, and glycine 76. The cysteines at positions 77 and 108 are disulfide-linked. 3 residues coordinate biotin: serine 110, threonine 112, and aspartate 148.

It belongs to the avidin/streptavidin family. As to quaternary structure, exhibits a dynamic oligomeric assembly: the apo form exits as homooctamers, which dissociate into homodimers upon biotin binding. The X-ray structure of the intact hoefavidin reveals unique crystal packing generated by an octameric cylindrical structure wherein the C-terminal segments of each monomer are introduced into the entrance of the biotin-binding site of an adjacent non-canonical monomer.

It localises to the secreted. Its function is as follows. The exact role played by hoefavidin in the host organism is still obscure. Forms a strong non-covalent complex with biotin and 2-iminobiotin. The chain is Hoefavidin from Hoeflea phototrophica (strain DSM 17068 / NCIMB 14078 / DFL-43).